Consider the following 483-residue polypeptide: GTPase Der (483 aa).

2 consecutive EngA-type G domains span residues 3–167 and 212–387; these read FTVA…GEER and LRIA…EIWN. GTP is bound by residues 9 to 16, 56 to 60, 119 to 122, 218 to 225, 265 to 269, and 330 to 333; these read GRPNVGKS, DTAGL, NKAE, GRPNAGKS, and NKWD. Positions 388–472 constitute a KH-like domain; it reads RRVSTGRLNR…PIRLSLRTSD (85 aa).

It belongs to the TRAFAC class TrmE-Era-EngA-EngB-Septin-like GTPase superfamily. EngA (Der) GTPase family. As to quaternary structure, associates with the 50S ribosomal subunit.

Functionally, GTPase that plays an essential role in the late steps of ribosome biogenesis. In Brucella anthropi (strain ATCC 49188 / DSM 6882 / CCUG 24695 / JCM 21032 / LMG 3331 / NBRC 15819 / NCTC 12168 / Alc 37) (Ochrobactrum anthropi), this protein is GTPase Der.